The chain runs to 457 residues: Karyogamy meiotic segregation protein 2 (457 aa).

Ser134 carries the phosphoserine modification.

In terms of assembly, interacts with sad1.

It localises to the cytoplasm. It is found in the cytoskeleton. Its subcellular location is the microtubule organizing center. The protein localises to the spindle pole body. The polypeptide is Karyogamy meiotic segregation protein 2 (kms2) (Schizosaccharomyces pombe (strain 972 / ATCC 24843) (Fission yeast)).